We begin with the raw amino-acid sequence, 385 residues long: NifS/IcsS protein homolog (385 aa).

Residues 69 to 70, asparagine 149, glutamine 178, and 199 to 201 each bind pyridoxal 5'-phosphate; these read GT and SSH. Lysine 202 carries the post-translational modification N6-(pyridoxal phosphate)lysine. Threonine 237 contacts pyridoxal 5'-phosphate. Residue cysteine 325 is the Cysteine persulfide intermediate of the active site. Cysteine 325 is a [2Fe-2S] cluster binding site.

Belongs to the class-V pyridoxal-phosphate-dependent aminotransferase family. NifS/IscS subfamily. Requires pyridoxal 5'-phosphate as cofactor.

This is NifS/IcsS protein homolog from Lactobacillus delbrueckii subsp. bulgaricus (strain ATCC 11842 / DSM 20081 / BCRC 10696 / JCM 1002 / NBRC 13953 / NCIMB 11778 / NCTC 12712 / WDCM 00102 / Lb 14).